The following is a 227-amino-acid chain: MVKLPSLKFLRRSTDETPNVSETASHSTVLDVGAEKLGKTYARALLAATQADGSTDAVVSDLNAICDEALLHNPKLQLAFQSPQIDADEKCRVVDRLFGGNSHPTLIKLMKVMAKRGRLGYLVAVRDAAVDLFDEAAGRVVAEVRTAVPMTEQLRGEVTQQLSSRFGKTVRLRESVDTELIGGMVIRVGDTVFDSSVASRLDKLGKSAAAGFARQLIEQSDRFSSSS.

This sequence belongs to the ATPase delta chain family. In terms of assembly, F-type ATPases have 2 components, F(1) - the catalytic core - and F(0) - the membrane proton channel. F(1) has five subunits: alpha(3), beta(3), gamma(1), delta(1), epsilon(1). F(0) has three main subunits: a(1), b(2) and c(10-14). The alpha and beta chains form an alternating ring which encloses part of the gamma chain. F(1) is attached to F(0) by a central stalk formed by the gamma and epsilon chains, while a peripheral stalk is formed by the delta and b chains.

Its subcellular location is the cell inner membrane. Functionally, f(1)F(0) ATP synthase produces ATP from ADP in the presence of a proton or sodium gradient. F-type ATPases consist of two structural domains, F(1) containing the extramembraneous catalytic core and F(0) containing the membrane proton channel, linked together by a central stalk and a peripheral stalk. During catalysis, ATP synthesis in the catalytic domain of F(1) is coupled via a rotary mechanism of the central stalk subunits to proton translocation. This protein is part of the stalk that links CF(0) to CF(1). It either transmits conformational changes from CF(0) to CF(1) or is implicated in proton conduction. This chain is ATP synthase subunit delta, found in Rhodopirellula baltica (strain DSM 10527 / NCIMB 13988 / SH1).